The chain runs to 636 residues: Chaperone protein HtpG (636 aa).

The a; substrate-binding stretch occupies residues 1-344 (MTLEADKQTH…SADLSLNVSR (344 aa)). Residues 345-561 (EILQSGPVVD…EGDLGLQMRQ (217 aa)) form a b region. The tract at residues 562–636 (LLEASGQKVP…LNKLLLELSA (75 aa)) is c.

Belongs to the heat shock protein 90 family. As to quaternary structure, homodimer.

It is found in the cytoplasm. Molecular chaperone. Has ATPase activity. The protein is Chaperone protein HtpG of Xylella fastidiosa (strain Temecula1 / ATCC 700964).